Here is a 159-residue protein sequence, read N- to C-terminus: 3-hydroxyacyl-[acyl-carrier-protein] dehydratase FabZ (159 aa).

H58 is a catalytic residue.

It belongs to the thioester dehydratase family. FabZ subfamily.

Its subcellular location is the cytoplasm. It catalyses the reaction a (3R)-hydroxyacyl-[ACP] = a (2E)-enoyl-[ACP] + H2O. Its function is as follows. Involved in unsaturated fatty acids biosynthesis. Catalyzes the dehydration of short chain beta-hydroxyacyl-ACPs and long chain saturated and unsaturated beta-hydroxyacyl-ACPs. The polypeptide is 3-hydroxyacyl-[acyl-carrier-protein] dehydratase FabZ (Helicobacter pylori (strain Shi470)).